Here is a 45-residue protein sequence, read N- to C-terminus: Large ribosomal subunit protein bL34 (45 aa).

Belongs to the bacterial ribosomal protein bL34 family.

The protein is Large ribosomal subunit protein bL34 of Clavibacter michiganensis subsp. michiganensis (strain NCPPB 382).